The sequence spans 466 residues: Adenosylhomocysteinase (466 aa).

Residues T57, D132, and E192 each coordinate substrate. 193 to 195 (TTT) provides a ligand contact to NAD(+). Positions 222 and 226 each coordinate substrate. Residues N227, 256–261 (GYGDVG), E279, N314, 335–337 (IGH), and N380 each bind NAD(+).

It belongs to the adenosylhomocysteinase family. Requires NAD(+) as cofactor.

The protein localises to the cytoplasm. The catalysed reaction is S-adenosyl-L-homocysteine + H2O = L-homocysteine + adenosine. It participates in amino-acid biosynthesis; L-homocysteine biosynthesis; L-homocysteine from S-adenosyl-L-homocysteine: step 1/1. Its function is as follows. May play a key role in the regulation of the intracellular concentration of adenosylhomocysteine. This Chromobacterium violaceum (strain ATCC 12472 / DSM 30191 / JCM 1249 / CCUG 213 / NBRC 12614 / NCIMB 9131 / NCTC 9757 / MK) protein is Adenosylhomocysteinase.